Consider the following 360-residue polypeptide: Phospho-N-acetylmuramoyl-pentapeptide-transferase (360 aa).

The next 10 helical transmembrane spans lie at G27–L47, T71–A91, W93–F113, L134–A154, T168–A188, G199–V219, I239–P259, A262–V282, L288–V308, and T337–L357.

It belongs to the glycosyltransferase 4 family. MraY subfamily. Requires Mg(2+) as cofactor.

It is found in the cell inner membrane. The enzyme catalyses UDP-N-acetyl-alpha-D-muramoyl-L-alanyl-gamma-D-glutamyl-meso-2,6-diaminopimeloyl-D-alanyl-D-alanine + di-trans,octa-cis-undecaprenyl phosphate = di-trans,octa-cis-undecaprenyl diphospho-N-acetyl-alpha-D-muramoyl-L-alanyl-D-glutamyl-meso-2,6-diaminopimeloyl-D-alanyl-D-alanine + UMP. The protein operates within cell wall biogenesis; peptidoglycan biosynthesis. Functionally, catalyzes the initial step of the lipid cycle reactions in the biosynthesis of the cell wall peptidoglycan: transfers peptidoglycan precursor phospho-MurNAc-pentapeptide from UDP-MurNAc-pentapeptide onto the lipid carrier undecaprenyl phosphate, yielding undecaprenyl-pyrophosphoryl-MurNAc-pentapeptide, known as lipid I. The chain is Phospho-N-acetylmuramoyl-pentapeptide-transferase from Ruegeria pomeroyi (strain ATCC 700808 / DSM 15171 / DSS-3) (Silicibacter pomeroyi).